We begin with the raw amino-acid sequence, 105 residues long: Met repressor (105 aa).

It belongs to the MetJ family. As to quaternary structure, homodimer.

Its subcellular location is the cytoplasm. Its function is as follows. This regulatory protein, when combined with SAM (S-adenosylmethionine) represses the expression of the methionine regulon and of enzymes involved in SAM synthesis. In Vibrio cholerae serotype O1 (strain ATCC 39541 / Classical Ogawa 395 / O395), this protein is Met repressor.